The following is a 972-amino-acid chain: FHF complex subunit HOOK-interacting protein 1B (972 aa).

Disordered regions lie at residues A465–P496, S510–L547, S573–W642, and S710–P733. S467 carries the phosphoserine modification. Over residues G479 to V490 the composition is skewed to low complexity. 4 positions are modified to phosphoserine: S510, S523, S529, and S533. Positions S523–G535 are enriched in low complexity. Residues G618–P627 are compositionally biased toward gly residues. 2 positions are modified to phosphoserine: S859 and S897.

It belongs to the FHIP family. In terms of assembly, component of the FTS/Hook/FHIP complex (FHF complex), composed of AKTIP/FTS, FHIP1B, and one or more members of the Hook family of proteins HOOK1, HOOK2, and HOOK3. The FHF complex associates with the homotypic vesicular sorting complex (the HOPS complex).

In terms of biological role, component of the FTS/Hook/FHIP complex (FHF complex). The FHF complex may function to promote vesicle trafficking and/or fusion via the homotypic vesicular protein sorting complex (the HOPS complex). FHF complex promotes the distribution of AP-4 complex to the perinuclear area of the cell. This is FHF complex subunit HOOK-interacting protein 1B (FHIP1B) from Pongo abelii (Sumatran orangutan).